We begin with the raw amino-acid sequence, 215 residues long: Cytochrome b6 (215 aa).

Residues 32 to 52 form a helical membrane-spanning segment; sequence IFYCLGGITLTCFLVQVATGF. Cys35 contributes to the heme c binding site. Residues His86 and His100 each contribute to the heme b site. A run of 3 helical transmembrane segments spans residues 90–110, 116–136, and 186–206; these read ASMM…TGGF, LTWV…VTGY, and LHTF…FLMI. Heme b-binding residues include His187 and His202.

The protein belongs to the cytochrome b family. PetB subfamily. The 4 large subunits of the cytochrome b6-f complex are cytochrome b6, subunit IV (17 kDa polypeptide, PetD), cytochrome f and the Rieske protein, while the 4 small subunits are PetG, PetL, PetM and PetN. The complex functions as a dimer. The cofactor is heme b. Heme c is required as a cofactor.

It is found in the plastid. Its subcellular location is the chloroplast thylakoid membrane. Its function is as follows. Component of the cytochrome b6-f complex, which mediates electron transfer between photosystem II (PSII) and photosystem I (PSI), cyclic electron flow around PSI, and state transitions. This Arabidopsis thaliana (Mouse-ear cress) protein is Cytochrome b6.